The chain runs to 249 residues: Segregation and condensation protein A (249 aa).

It belongs to the ScpA family. Component of a cohesin-like complex composed of ScpA, ScpB and the Smc homodimer, in which ScpA and ScpB bind to the head domain of Smc. The presence of the three proteins is required for the association of the complex with DNA.

The protein localises to the cytoplasm. Its function is as follows. Participates in chromosomal partition during cell division. May act via the formation of a condensin-like complex containing Smc and ScpB that pull DNA away from mid-cell into both cell halves. The polypeptide is Segregation and condensation protein A (Listeria monocytogenes serotype 4b (strain CLIP80459)).